Reading from the N-terminus, the 360-residue chain is UPF0324 membrane protein DVU_0123 (360 aa).

10 consecutive transmembrane segments (helical) span residues 20–42 (VTES…FVAP), 57–79 (KDFI…PAVF), 100–122 (SYSL…VFLF), 142–164 (AACL…APAV), 171–193 (MAYS…PLIG), 203–225 (FGAF…FGFS), 232–254 (AGIY…AIMA), 278–297 (FPLF…AGVL), 310–327 (EWAF…TRLS), and 337–359 (FLFG…LLFM).

Belongs to the UPF0324 family.

The protein resides in the cell membrane. The protein is UPF0324 membrane protein DVU_0123 of Nitratidesulfovibrio vulgaris (strain ATCC 29579 / DSM 644 / CCUG 34227 / NCIMB 8303 / VKM B-1760 / Hildenborough) (Desulfovibrio vulgaris).